A 3473-amino-acid chain; its full sequence is AP2/ERF domain-containing protein PFD0985w (3473 aa).

Disordered regions lie at residues 35-61 (NNII…NNNN), 366-450 (KMER…HLVC), 647-704 (NNNN…INAK), 750-801 (NIIK…RKKK), 1096-1196 (VDNN…MNMN), 1300-1328 (DNTS…NSRG), 1388-1418 (HLRS…GAER), 1773-1807 (NNTG…NNKV), and 1864-1898 (IGED…NNLS). Composition is skewed to low complexity over residues 44 to 61 (NGHN…NNNN), 396 to 442 (NNND…NSNN), and 647 to 666 (NNNN…NNNN). Basic and acidic residues predominate over residues 683-694 (TGDKHETSKKED). Positions 751-768 (IIKSDNVNNNNNNNNNNN) are enriched in low complexity. Over residues 785–801 (NKKHKKKNIHDNNRKKK) the composition is skewed to basic residues. The segment covering 1098–1156 (NNNNNNNNNNNNNVNNISNNGTNLEENANNANNANNPNNANNPNNANNSNNADYVNDYN) has biased composition (low complexity). The segment covering 1160 to 1171 (KEEDDDDEEEDN) has biased composition (acidic residues). Positions 1182 to 1196 (TNYNININGENMNMN) are enriched in low complexity. Polar residues-rich tracts occupy residues 1314-1326 (VGSN…NNNS) and 1390-1412 (RSSN…SSMR). Residues 1773 to 1805 (NNTGTTQNNNKYGTNSNNNNNNNNNNNNNNNNN) are compositionally biased toward low complexity. Basic residues predominate over residues 1881–1893 (LKRRKNGNSKRAK). A DNA-binding region (AP2/ERF 1) is located at residues 1957-2011 (PLPTGVYFDSARKLWRCQWKENGKFKTKGFSLIHYSTLEEARKQCILYRCDVGNI). Disordered regions lie at residues 2068–2088 (EKTG…NVNN), 2319–2343 (QVDV…SNSK), 2387–2470 (TNDN…NIRS), 2520–2584 (LGNG…NYNN), 2609–2677 (LYGK…PASN), 2840–2860 (MNNN…NNVK), 2881–2902 (NDKL…SSSP), and 2937–2960 (KYVE…KKDE). Residues 2333–2342 (KRSKRSKSNS) show a composition bias toward basic residues. Composition is skewed to low complexity over residues 2388 to 2400 (NDNN…NNND) and 2409 to 2460 (DNNN…NNND). The segment covering 2525–2542 (DGEEEGGGDYDEKEDDLL) has biased composition (acidic residues). 2 stretches are compositionally biased toward low complexity: residues 2557–2584 (NNNN…NYNN) and 2615–2624 (NNNNNNNNNN). Residues 2663 to 2675 (LLNSQVNESSAPA) are compositionally biased toward polar residues. The span at 2841-2858 (NNNNNNNNNNNNNNNNNN) shows a compositional bias: low complexity. Basic and acidic residues predominate over residues 2943 to 2953 (NGDKETNDYNT). Positions 3268 to 3321 (SLPKGIYYDHAKKLYRVQYIINNSIKTKGFSVKKLGLAQAKIEAESFRNFCLEN) form a DNA-binding region, AP2/ERF 2. A compositionally biased stretch (low complexity) spans 3369–3391 (KMSINNDGNNNDGNNNDGNNNDD). A disordered region spans residues 3369-3473 (KMSINNDGNN…NNDNEMSQNE (105 aa)). Residues 3392–3403 (NNNDDNNNDDNN) are compositionally biased toward acidic residues. Over residues 3404 to 3457 (NDGNNNDDNNNEGINNDDNNNEGINNDDNNNEGINNNDDNNNNDDNNNEGINND) the composition is skewed to low complexity.

It is found in the nucleus. This Plasmodium falciparum (isolate 3D7) protein is AP2/ERF domain-containing protein PFD0985w.